The chain runs to 591 residues: Putative BTB/POZ domain-containing protein At5g13600 (591 aa).

One can recognise a BTB domain in the interval 28–95 (PDVMIQVVDE…CYGVRIEVTP (68 aa)). The NPH3 domain maps to 208–493 (NWWFNDVSSF…VQVLFFEQMR (286 aa)). Tyr434 bears the Phosphotyrosine mark.

Belongs to the NPH3 family.

It functions in the pathway protein modification; protein ubiquitination. May act as a substrate-specific adapter of an E3 ubiquitin-protein ligase complex (CUL3-RBX1-BTB) which mediates the ubiquitination and subsequent proteasomal degradation of target proteins. In Arabidopsis thaliana (Mouse-ear cress), this protein is Putative BTB/POZ domain-containing protein At5g13600.